Reading from the N-terminus, the 1220-residue chain is Formin-F (1220 aa).

The segment covering 1–10 (MNRIFGRKKK) has biased composition (basic residues). The segment at 1–62 (MNRIFGRKKK…TNSKSADKFD (62 aa)) is disordered. Residues 6-373 (GRKKKDKDSD…QISVNKPMIG (368 aa)) enclose the GBD/FH3 domain. Residues 11–20 (DKDSDEKGST) show a composition bias toward basic and acidic residues. The segment covering 41–56 (AYSSLQPDGNNSTNSK) has biased composition (polar residues). The stretch at 392-428 (VALQSEFQKNIEELAKVKDQLKKANFDLNIANQELSS) forms a coiled coil. Disordered regions lie at residues 461–659 (IDSN…KFTV), 711–732 (SQKK…GTVS), and 1049–1192 (DEAK…KKDI). Composition is skewed to low complexity over residues 501–518 (SKPP…SSSQ) and 525–554 (SNLS…PQQQ). Residues 532–655 (SDSLSNDFKS…NSNKPPANAP (124 aa)) form the FH1 domain. The segment covering 555-564 (NIESTLTPEP) has biased composition (polar residues). A compositionally biased stretch (pro residues) spans 575–638 (TTPPPAPPAP…GKGGPPPPPG (64 aa)). One can recognise an FH2 domain in the interval 656–1054 (KFTVSKPTTK…AIKRDEAKAK (399 aa)). A compositionally biased stretch (basic and acidic residues) spans 711–722 (SQKKLEASDKKS). Positions 1032 to 1062 (YKDFQRDKEAAERAIKRDEAKAKKAQQLKRM) form a coiled coil. Residues 1066–1083 (IASSTNNKNPLASSSTSV) are compositionally biased toward polar residues. One can recognise a DAD domain in the interval 1083 to 1158 (VGDGGMVEDI…TPSKSGSRRE (76 aa)). A compositionally biased stretch (low complexity) spans 1117-1142 (DSSSITTISEQSENSNTSSITITTPS). The span at 1161–1192 (TSKSSDKDKEKEKEKEKQCESTESEDINKKDI) shows a compositional bias: basic and acidic residues.

This sequence belongs to the formin homology family. Diaphanous subfamily. As to quaternary structure, interacts (via GBD/FH3 domain) with activated Rho-GTPases.

In terms of biological role, formins play an important role in the nucleation of actin and the formation of linear actin filaments. In Dictyostelium discoideum (Social amoeba), this protein is Formin-F (forF).